The chain runs to 145 residues: Conglutin (145 aa).

The first 21 residues, 1-21 (MAKSTILVALLALVLVAHASA), serve as a signal peptide directing secretion. 5 cysteine pairs are disulfide-bonded: Cys35–Cys92, Cys47–Cys79, Cys80–Cys128, Cys94–Cys136, and Cys105–Cys145.

The protein belongs to the 2S seed storage albumins family. As to expression, expressed in seeds. Not expressed in roots, pegs (budding ovaries) or leaves.

The chain is Conglutin from Arachis hypogaea (Peanut).